The chain runs to 339 residues: Ketol-acid reductoisomerase (NADP(+)) (339 aa).

Residues 1 to 182 (MRVYYDRDAD…GGGRAGIIET (182 aa)) form the KARI N-terminal Rossmann domain. Residues 24–27 (YGSQ), Arg-48, Ser-51, Ser-53, and 83–86 (DELQ) each bind NADP(+). Residue His-108 is part of the active site. Gly-134 is an NADP(+) binding site. The 146-residue stretch at 183–328 (TFKEECETDL…ERLRGMMPWI (146 aa)) folds into the KARI C-terminal knotted domain. Mg(2+)-binding residues include Asp-191, Glu-195, Glu-227, and Glu-231. Ser-252 is a substrate binding site.

The protein belongs to the ketol-acid reductoisomerase family. Mg(2+) is required as a cofactor.

The enzyme catalyses (2R)-2,3-dihydroxy-3-methylbutanoate + NADP(+) = (2S)-2-acetolactate + NADPH + H(+). It catalyses the reaction (2R,3R)-2,3-dihydroxy-3-methylpentanoate + NADP(+) = (S)-2-ethyl-2-hydroxy-3-oxobutanoate + NADPH + H(+). It participates in amino-acid biosynthesis; L-isoleucine biosynthesis; L-isoleucine from 2-oxobutanoate: step 2/4. The protein operates within amino-acid biosynthesis; L-valine biosynthesis; L-valine from pyruvate: step 2/4. Its function is as follows. Involved in the biosynthesis of branched-chain amino acids (BCAA). Catalyzes an alkyl-migration followed by a ketol-acid reduction of (S)-2-acetolactate (S2AL) to yield (R)-2,3-dihydroxy-isovalerate. In the isomerase reaction, S2AL is rearranged via a Mg-dependent methyl migration to produce 3-hydroxy-3-methyl-2-ketobutyrate (HMKB). In the reductase reaction, this 2-ketoacid undergoes a metal-dependent reduction by NADPH to yield (R)-2,3-dihydroxy-isovalerate. The polypeptide is Ketol-acid reductoisomerase (NADP(+)) (Methylobacterium sp. (strain 4-46)).